The sequence spans 395 residues: Calcium sensing receptor, chloroplastic (395 aa).

The span at methionine 1–leucine 12 shows a compositional bias: low complexity. The tract at residues methionine 1–tryptophan 27 is disordered. The transit peptide at methionine 1–alanine 39 directs the protein to the chloroplast. The Lumenal, thylakoid portion of the chain corresponds to alanine 40 to tyrosine 182. The helical transmembrane segment at valine 183–valine 203 threads the bilayer. Residues serine 204–aspartate 395 lie on the Stromal side of the membrane. In terms of domain architecture, Rhodanese spans threonine 224 to serine 345. Residue threonine 377 is modified to Phosphothreonine.

In terms of processing, phosphorylated in both bundle sheath and mesophyll cells, under both low and high light regimes (70 vs 900 umol photons/m-2/s).

The protein resides in the plastid. Its subcellular location is the chloroplast thylakoid membrane. In terms of biological role, modulates cytoplasmic Ca(2+) concentration and is crucial for proper stomatal regulation in response to elevated levels of external Ca(2+). May function by regulating concentrations of inositol 1,4,5-trisphosphate (IP3), which in turn triggers release of Ca(2+) from internal stores. May play a role in de-etiolation. The sequence is that of Calcium sensing receptor, chloroplastic from Zea mays (Maize).